The sequence spans 367 residues: Putative methylthioribose-1-phosphate isomerase (367 aa).

Substrate contacts are provided by residues 65 to 67, Arg-106, and Gln-218; that span reads RGA. Catalysis depends on Asp-259, which acts as the Proton donor. Residue 269–270 participates in substrate binding; sequence NK.

The protein belongs to the eIF-2B alpha/beta/delta subunits family. MtnA subfamily.

The enzyme catalyses 5-(methylsulfanyl)-alpha-D-ribose 1-phosphate = 5-(methylsulfanyl)-D-ribulose 1-phosphate. Functionally, catalyzes the interconversion of methylthioribose-1-phosphate (MTR-1-P) into methylthioribulose-1-phosphate (MTRu-1-P). The protein is Putative methylthioribose-1-phosphate isomerase of Sulfolobus acidocaldarius (strain ATCC 33909 / DSM 639 / JCM 8929 / NBRC 15157 / NCIMB 11770).